A 701-amino-acid chain; its full sequence is Polyribonucleotide nucleotidyltransferase (701 aa).

Mg(2+) contacts are provided by Asp-487 and Asp-493. Positions 554–613 (PTMIAMKIDTDKIRDVIGKGGATIRAICEETKASIDIEDDGSIKIFGESKEAAEAARQRV) constitute a KH domain. The S1 motif domain occupies 623-691 (GKIYVGKVER…NRGRIKLSIK (69 aa)).

Belongs to the polyribonucleotide nucleotidyltransferase family. Component of the RNA degradosome, which is a multiprotein complex involved in RNA processing and mRNA degradation. Mg(2+) serves as cofactor.

The protein localises to the cytoplasm. The enzyme catalyses RNA(n+1) + phosphate = RNA(n) + a ribonucleoside 5'-diphosphate. In terms of biological role, involved in mRNA degradation. Catalyzes the phosphorolysis of single-stranded polyribonucleotides processively in the 3'- to 5'-direction. In Pseudomonas savastanoi pv. phaseolicola (strain 1448A / Race 6) (Pseudomonas syringae pv. phaseolicola (strain 1448A / Race 6)), this protein is Polyribonucleotide nucleotidyltransferase.